A 129-amino-acid polypeptide reads, in one-letter code: Follitropin subunit beta (129 aa).

An N-terminal signal peptide occupies residues 1-20; that stretch reads MKSVQFCFLFCCWRAICCRS. Intrachain disulfides connect cysteine 21–cysteine 69, cysteine 35–cysteine 84, cysteine 38–cysteine 122, cysteine 46–cysteine 100, cysteine 50–cysteine 102, and cysteine 105–cysteine 112. N-linked (GlcNAc...) asparagine glycosylation is found at asparagine 25 and asparagine 42.

Belongs to the glycoprotein hormones subunit beta family. As to quaternary structure, heterodimer. The active follitropin is a heterodimer composed of an alpha chain/CGA shared with other hormones and a unique beta chain/FSHB shown here.

Its subcellular location is the secreted. Together with the alpha chain CGA constitutes follitropin, the follicle-stimulating hormone, and provides its biological specificity to the hormone heterodimer. Binds FSHR, a G protein-coupled receptor, on target cells to activate downstream signaling pathways. Follitropin is involved in follicle development and spermatogenesis in reproductive organs. The chain is Follitropin subunit beta (FSHB) from Bubalus bubalis (Domestic water buffalo).